A 301-amino-acid polypeptide reads, in one-letter code: Ribosomal RNA small subunit methyltransferase A (301 aa).

Positions 29, 31, 56, 77, 102, and 127 each coordinate S-adenosyl-L-methionine.

The protein belongs to the class I-like SAM-binding methyltransferase superfamily. rRNA adenine N(6)-methyltransferase family. RsmA subfamily.

The protein localises to the cytoplasm. It catalyses the reaction adenosine(1518)/adenosine(1519) in 16S rRNA + 4 S-adenosyl-L-methionine = N(6)-dimethyladenosine(1518)/N(6)-dimethyladenosine(1519) in 16S rRNA + 4 S-adenosyl-L-homocysteine + 4 H(+). Specifically dimethylates two adjacent adenosines (A1518 and A1519) in the loop of a conserved hairpin near the 3'-end of 16S rRNA in the 30S particle. May play a critical role in biogenesis of 30S subunits. The chain is Ribosomal RNA small subunit methyltransferase A from Halothermothrix orenii (strain H 168 / OCM 544 / DSM 9562).